Here is a 102-residue protein sequence, read N- to C-terminus: Large ribosomal subunit protein uL24 (102 aa).

This sequence belongs to the universal ribosomal protein uL24 family. In terms of assembly, part of the 50S ribosomal subunit.

Functionally, one of two assembly initiator proteins, it binds directly to the 5'-end of the 23S rRNA, where it nucleates assembly of the 50S subunit. In terms of biological role, one of the proteins that surrounds the polypeptide exit tunnel on the outside of the subunit. This is Large ribosomal subunit protein uL24 from Leuconostoc citreum (strain KM20).